Here is a 183-residue protein sequence, read N- to C-terminus: Small ribosomal subunit protein bS20c (183 aa).

Residues 1 to 68 constitute a chloroplast transit peptide; that stretch reads MAAISMACVS…FQRRGFSVVC (68 aa). The interval 79 to 99 is disordered; it reads AAKRTRQAETRRLRNKARKSE.

Component of the chloroplast small ribosomal subunit (SSU). Mature 70S chloroplast ribosomes of higher plants consist of a small (30S) and a large (50S) subunit. The 30S small subunit contains 1 molecule of ribosomal RNA (16S rRNA) and 24 different proteins. The 50S large subunit contains 3 rRNA molecules (23S, 5S and 4.5S rRNA) and 33 different proteins.

The protein localises to the plastid. Its subcellular location is the chloroplast. Component of the chloroplast ribosome (chloro-ribosome), a dedicated translation machinery responsible for the synthesis of chloroplast genome-encoded proteins, including proteins of the transcription and translation machinery and components of the photosynthetic apparatus. In Spinacia oleracea (Spinach), this protein is Small ribosomal subunit protein bS20c (RPS20).